The following is a 289-amino-acid chain: Splicing factor C9orf78 (289 aa).

The segment covering 1 to 12 has biased composition (basic residues); it reads MPVVRKIFRRRR. The interval 1–27 is disordered; it reads MPVVRKIFRRRRGDSESEEDEQDSEEV. An interaction with SNRNP200 region spans residues 5 to 58; it reads RKIFRRRRGDSESEEDEQDSEEVRLKLEETREVQNLRKRPNGVSAVALLVGEKV. Phosphoserine occurs at positions 15 and 17. At Tyr-147 the chain carries Phosphotyrosine. Basic and acidic residues predominate over residues 232 to 283; the sequence is LNAPIRRNKEEPKARPLRVGDTEKPEPERSPPNRKRPANEKATDDYHYEKFK. Residues 232-289 are disordered; the sequence is LNAPIRRNKEEPKARPLRVGDTEKPEPERSPPNRKRPANEKATDDYHYEKFKKMNRRY. Position 253 is a phosphothreonine (Thr-253). The residue at position 261 (Ser-261) is a Phosphoserine.

It belongs to the TLS1 family. As to quaternary structure, component of the spliceosome. Interacts with SNRNP200; the interaction is direct. Interacts with PRPF8.

The protein localises to the nucleus. It is found in the chromosome. Its subcellular location is the centromere. Its function is as follows. Plays a role in pre-mRNA splicing by promoting usage of the upstream 3'-splice site at alternative NAGNAG splice sites; these are sites featuring alternative acceptor motifs separated by only a few nucleotides. May also modulate exon inclusion events. Plays a role in spliceosomal remodeling by displacing WBP4 from SNRNP200 and may act to inhibit SNRNP200 helicase activity. Binds U5 snRNA. Required for proper chromosome segregation. Not required for splicing of shelterin components. The protein is Splicing factor C9orf78 (C9orf78) of Homo sapiens (Human).